The sequence spans 364 residues: Methylthioribose-1-phosphate isomerase (364 aa).

Substrate contacts are provided by residues arginine 53 to alanine 55, arginine 90, and glutamine 200. Catalysis depends on aspartate 241, which acts as the Proton donor. Asparagine 251–lysine 252 lines the substrate pocket.

This sequence belongs to the eIF-2B alpha/beta/delta subunits family. MtnA subfamily.

It catalyses the reaction 5-(methylsulfanyl)-alpha-D-ribose 1-phosphate = 5-(methylsulfanyl)-D-ribulose 1-phosphate. Its pathway is amino-acid biosynthesis; L-methionine biosynthesis via salvage pathway; L-methionine from S-methyl-5-thio-alpha-D-ribose 1-phosphate: step 1/6. In terms of biological role, catalyzes the interconversion of methylthioribose-1-phosphate (MTR-1-P) into methylthioribulose-1-phosphate (MTRu-1-P). The polypeptide is Methylthioribose-1-phosphate isomerase (Methylobacterium nodulans (strain LMG 21967 / CNCM I-2342 / ORS 2060)).